The primary structure comprises 155 residues: Protein-export protein SecB (155 aa).

The protein belongs to the SecB family. As to quaternary structure, homotetramer, a dimer of dimers. One homotetramer interacts with 1 SecA dimer.

It localises to the cytoplasm. One of the proteins required for the normal export of preproteins out of the cell cytoplasm. It is a molecular chaperone that binds to a subset of precursor proteins, maintaining them in a translocation-competent state. It also specifically binds to its receptor SecA. The protein is Protein-export protein SecB of Psychromonas ingrahamii (strain DSM 17664 / CCUG 51855 / 37).